The sequence spans 396 residues: Tryptophan synthase beta chain (396 aa).

N6-(pyridoxal phosphate)lysine is present on K86.

It belongs to the TrpB family. In terms of assembly, tetramer of two alpha and two beta chains. Pyridoxal 5'-phosphate serves as cofactor.

The catalysed reaction is (1S,2R)-1-C-(indol-3-yl)glycerol 3-phosphate + L-serine = D-glyceraldehyde 3-phosphate + L-tryptophan + H2O. Its pathway is amino-acid biosynthesis; L-tryptophan biosynthesis; L-tryptophan from chorismate: step 5/5. Its function is as follows. The beta subunit is responsible for the synthesis of L-tryptophan from indole and L-serine. The chain is Tryptophan synthase beta chain from Aliivibrio salmonicida (strain LFI1238) (Vibrio salmonicida (strain LFI1238)).